The primary structure comprises 186 residues: Large ribosomal subunit protein uL5 (186 aa).

Belongs to the universal ribosomal protein uL5 family. Part of the 50S ribosomal subunit; part of the 5S rRNA/L5/L18/L25 subcomplex. Contacts the 5S rRNA and the P site tRNA. Forms a bridge to the 30S subunit in the 70S ribosome.

Functionally, this is one of the proteins that bind and probably mediate the attachment of the 5S RNA into the large ribosomal subunit, where it forms part of the central protuberance. In the 70S ribosome it contacts protein S13 of the 30S subunit (bridge B1b), connecting the 2 subunits; this bridge is implicated in subunit movement. Contacts the P site tRNA; the 5S rRNA and some of its associated proteins might help stabilize positioning of ribosome-bound tRNAs. This chain is Large ribosomal subunit protein uL5, found in Maricaulis maris (strain MCS10) (Caulobacter maris).